The sequence spans 780 residues: Replication origin-binding protein (780 aa).

Positions 39 to 195 (SFENVRQPIK…AAFKPDTQIA (157 aa)) constitute a Helicase ATP-binding domain. ATP is bound at residue 52-59 (AAMGSGKT).

Belongs to the herpesviridae OriBP family.

In terms of biological role, probably involved in DNA replication. Binds the origin of replication (ori). The sequence is that of Replication origin-binding protein (U73) from Homo sapiens (Human).